Consider the following 118-residue polypeptide: MLDSLKQKKNFQRIKMRIKTGDLVKVINGKEKGKTGEVLKTIPLENKVVVKGINLRTKHVKPTQEGETGRILTEEASLHASNVMFFSKEKNLTSKIEYFIDKEGVKKRRLKKTGEVID.

It belongs to the universal ribosomal protein uL24 family. In terms of assembly, part of the 50S ribosomal subunit.

Its function is as follows. One of two assembly initiator proteins, it binds directly to the 5'-end of the 23S rRNA, where it nucleates assembly of the 50S subunit. One of the proteins that surrounds the polypeptide exit tunnel on the outside of the subunit. In Prochlorococcus marinus (strain MIT 9215), this protein is Large ribosomal subunit protein uL24.